Consider the following 37-residue polypeptide: Diuretic hormone 1 (37 aa).

The protein belongs to the sauvagine/corticotropin-releasing factor/urotensin I family.

The protein localises to the secreted. Stimulates fluid secretion by the Malpighian tubules. Increases cyclic AMP production. The polypeptide is Diuretic hormone 1 (Tenebrio molitor (Yellow mealworm beetle)).